The chain runs to 137 residues: Small ribosomal subunit protein bS6 (137 aa).

This sequence belongs to the bacterial ribosomal protein bS6 family.

Functionally, binds together with bS18 to 16S ribosomal RNA. In Mycoplasma mycoides subsp. mycoides SC (strain CCUG 32753 / NCTC 10114 / PG1), this protein is Small ribosomal subunit protein bS6.